We begin with the raw amino-acid sequence, 359 residues long: Phosphoribosylformylglycinamidine cyclo-ligase (359 aa).

This sequence belongs to the AIR synthase family.

The protein resides in the cytoplasm. It carries out the reaction 2-formamido-N(1)-(5-O-phospho-beta-D-ribosyl)acetamidine + ATP = 5-amino-1-(5-phospho-beta-D-ribosyl)imidazole + ADP + phosphate + H(+). The protein operates within purine metabolism; IMP biosynthesis via de novo pathway; 5-amino-1-(5-phospho-D-ribosyl)imidazole from N(2)-formyl-N(1)-(5-phospho-D-ribosyl)glycinamide: step 2/2. The sequence is that of Phosphoribosylformylglycinamidine cyclo-ligase from Brucella canis (strain ATCC 23365 / NCTC 10854 / RM-666).